The chain runs to 468 residues: 3-isopropylmalate dehydratase large subunit (468 aa).

The [4Fe-4S] cluster site is built by Cys347, Cys407, and Cys410.

It belongs to the aconitase/IPM isomerase family. LeuC type 1 subfamily. As to quaternary structure, heterodimer of LeuC and LeuD. [4Fe-4S] cluster is required as a cofactor.

It catalyses the reaction (2R,3S)-3-isopropylmalate = (2S)-2-isopropylmalate. The protein operates within amino-acid biosynthesis; L-leucine biosynthesis; L-leucine from 3-methyl-2-oxobutanoate: step 2/4. Catalyzes the isomerization between 2-isopropylmalate and 3-isopropylmalate, via the formation of 2-isopropylmaleate. The protein is 3-isopropylmalate dehydratase large subunit of Prochlorococcus marinus (strain AS9601).